The primary structure comprises 86 residues: NADH-ubiquinone oxidoreductase chain 4L (86 aa).

The next 2 helical transmembrane spans lie at 22 to 42 (LLVTLLSFEFLILLLFSLLVY) and 52 to 72 (FIFLSVTVCEGALGLSVLVSL).

The protein belongs to the complex I subunit 4L family.

Its subcellular location is the mitochondrion membrane. It carries out the reaction a ubiquinone + NADH + 5 H(+)(in) = a ubiquinol + NAD(+) + 4 H(+)(out). Its function is as follows. Core subunit of the mitochondrial membrane respiratory chain NADH dehydrogenase (Complex I) that is believed to belong to the minimal assembly required for catalysis. Complex I functions in the transfer of electrons from NADH to the respiratory chain. The immediate electron acceptor for the enzyme is believed to be ubiquinone. The protein is NADH-ubiquinone oxidoreductase chain 4L (ND4L) of Artemia salina (Brine shrimp).